Reading from the N-terminus, the 322-residue chain is Aspartate carbamoyltransferase catalytic subunit (322 aa).

Carbamoyl phosphate-binding residues include Arg65 and Thr66. Lys93 lines the L-aspartate pocket. 3 residues coordinate carbamoyl phosphate: Arg115, His143, and Gln146. L-aspartate-binding residues include Arg176 and Arg230. Residues Gly271 and Pro272 each coordinate carbamoyl phosphate.

This sequence belongs to the aspartate/ornithine carbamoyltransferase superfamily. ATCase family. As to quaternary structure, heterododecamer (2C3:3R2) of six catalytic PyrB chains organized as two trimers (C3), and six regulatory PyrI chains organized as three dimers (R2).

The catalysed reaction is carbamoyl phosphate + L-aspartate = N-carbamoyl-L-aspartate + phosphate + H(+). Its pathway is pyrimidine metabolism; UMP biosynthesis via de novo pathway; (S)-dihydroorotate from bicarbonate: step 2/3. In terms of biological role, catalyzes the condensation of carbamoyl phosphate and aspartate to form carbamoyl aspartate and inorganic phosphate, the committed step in the de novo pyrimidine nucleotide biosynthesis pathway. This chain is Aspartate carbamoyltransferase catalytic subunit, found in Brucella anthropi (strain ATCC 49188 / DSM 6882 / CCUG 24695 / JCM 21032 / LMG 3331 / NBRC 15819 / NCTC 12168 / Alc 37) (Ochrobactrum anthropi).